A 197-amino-acid polypeptide reads, in one-letter code: Adenylyl-sulfate kinase (197 aa).

33–40 is an ATP binding site; that stretch reads GLSGSGKS. The active-site Phosphoserine intermediate is the serine 107.

It belongs to the APS kinase family.

The catalysed reaction is adenosine 5'-phosphosulfate + ATP = 3'-phosphoadenylyl sulfate + ADP + H(+). It participates in sulfur metabolism; hydrogen sulfide biosynthesis; sulfite from sulfate: step 2/3. In terms of biological role, catalyzes the synthesis of activated sulfate. The chain is Adenylyl-sulfate kinase from Bacillus licheniformis (strain ATCC 14580 / DSM 13 / JCM 2505 / CCUG 7422 / NBRC 12200 / NCIMB 9375 / NCTC 10341 / NRRL NRS-1264 / Gibson 46).